A 504-amino-acid chain; its full sequence is MEEFQGYLELDRYQQHDFLYPLIFREYIYALAHDHGLNRSILLDNVGYDTKYSLLIIKRLISRMYQQNHLIISANDSNQNKFFGYNKNLYSQMMSEGFAVIVEIPFSLRLVSSLEATEIVKSYNLRSIHSIFPFLEDKFPHLNYVSDVLIPYPIHLEILVQTLRYWVKDPSSLHLLRLLLHEYYNWNSLITTKKVIFSKSNPRLFLLLYNSHVCEYESILLFLRNQSSHLRLTSSGIFFERIHFYEKKKYPVEEVFVNDFPAAILWFFKDPFMHYVRYQGKSILSSKDTPLLMNKWKYYLVNLWQCHSYVWSQPGRIYINQLSKHSLDFLGYFSSMRPNLSVVRSQMLENSFLMDNAMKKLDTLVPIIPLIGSLAKVKFCNALGHPISKSTWADSSDFDIIDRFVHICRNLSHYYSGSSRKKSLYRIKYILRLSCVKTLARKHKSTVRTFLKRLGYKLLDEFFTEEEQILSLIFPRASYTLKKFYRGRIWYLDIFCINDLVNHE.

It belongs to the intron maturase 2 family. MatK subfamily.

It is found in the plastid. It localises to the chloroplast. Its function is as follows. Usually encoded in the trnK tRNA gene intron. Probably assists in splicing its own and other chloroplast group II introns. This chain is Maturase K, found in Vauquelinia californica (Arizona rosewood).